Consider the following 257-residue polypeptide: MNPLIIKLGGVLLDSEEALERLFSALVDYRESHQRPLVIVHGGGCVVDELMKGLNLPVKKKNGLRVTPADQIDIITGALAGTANKTLLSWAKKHHIASVGLYLGDGDSVKVTQLDEELGHVGLAQPGSPKLINTLLEGGFLPVVSSIGVTEEGQLMNVNADQAATALAATLGADLILLSDVSGILDGKGQRIAEMTAAKAEQLISQGIITDGMIVKVNAALDAARTLGRPVDIASWRHAEQLPALFNGTPIGTRILA.

Residues 43–44, arginine 65, and asparagine 157 contribute to the substrate site; that span reads GG. ATP contacts are provided by residues 180–185 and 208–210; these read DVSGIL and IIT.

Belongs to the acetylglutamate kinase family. ArgB subfamily. Homodimer.

It localises to the cytoplasm. The enzyme catalyses N-acetyl-L-glutamate + ATP = N-acetyl-L-glutamyl 5-phosphate + ADP. Its pathway is amino-acid biosynthesis; L-arginine biosynthesis; N(2)-acetyl-L-ornithine from L-glutamate: step 2/4. Catalyzes the ATP-dependent phosphorylation of N-acetyl-L-glutamate. This Enterobacter sp. (strain 638) protein is Acetylglutamate kinase.